The sequence spans 286 residues: Aquaporin PIP1-1 (286 aa).

The segment at 1-34 (MEGKEEDVRLGANKFSERQPIGTAAQSDKGYKEP) is disordered. Topologically, residues 1 to 54 (MEGKEEDVRLGANKFSERQPIGTAAQSDKGYKEPPPAPLFEPGELTSWSFYRAG) are cytoplasmic. A helical transmembrane segment spans residues 55 to 75 (IAEFMATFLFLYITILTVMGV). Residues 76-88 (VKSNSKCSTVGIQ) are Extracellular-facing. The chain crosses the membrane as a helical span at residues 89 to 109 (GIAWAFGGMIFALVYCTAGIS). The Cytoplasmic portion of the chain corresponds to 110-131 (GGHINPAVTFGLFLARKLSLTR). Positions 114–116 (NPA) match the NPA 1 motif. Residues 132-152 (ALFYMVMQCLGAICGAGVVKG) traverse the membrane as a helical segment. Over 153-174 (YQKGLYESNGGGANVVAPGYTK) the chain is Extracellular. The helical transmembrane segment at 175-195 (GDGLGAEIVGTFILVYTVFSA) threads the bilayer. Residues 196–208 (TDAKRNARDSHVP) lie on the Cytoplasmic side of the membrane. A helical membrane pass occupies residues 209–229 (ILAPLPIGFAVFLVHLATIPI). Over 230 to 256 (TGTGINPARSLGAAIIYNKKHAWDDHW) the chain is Extracellular. The short motif at 235 to 237 (NPA) is the NPA 2 element. Residues 257-277 (IFWVGPFIGAALAAIYHQIVI) form a helical membrane-spanning segment. The Cytoplasmic segment spans residues 278 to 286 (RAIPFKSRP).

It belongs to the MIP/aquaporin (TC 1.A.8) family. PIP (TC 1.A.8.11) subfamily. Expressed in leaves, roots, stems, flowers and fruits, with highest levels in roots.

The protein resides in the cell membrane. Functionally, water channel required to facilitate the transport of water across cell membrane; mercury-insensitive. Promotes primary root elongation and root hair formation. Contributes to the tolerance to multiple abiotic stresses including salt (NaCl), cold and water deprivation, by modulating cytosolic K(+)/Na(+) ratio, maintaining osmotic balance, and reducing membrane injury (e.g. oxidative injury). Also regulates the expression of abscisic acid (ABA)-responsive genes during dehydration and salt stresses. The polypeptide is Aquaporin PIP1-1 (Musa acuminata (Banana)).